Here is a 383-residue protein sequence, read N- to C-terminus: 3-ketosteroid-9-alpha-monooxygenase, oxygenase component (383 aa).

A Rieske domain is found at 24–126 (WHCLGPVKNF…TDVRGGLLFV (103 aa)). 4 residues coordinate [2Fe-2S] cluster: Cys-65, His-67, Cys-84, and His-87. 4 residues coordinate Fe cation: Asn-173, His-179, His-184, and Asp-302.

Homotrimer. The two-component system 3-ketosteroid-9-alpha-monooxygenase is composed of an oxygenase component KshA and a reductase component KshB. [2Fe-2S] cluster is required as a cofactor. Fe cation serves as cofactor.

It carries out the reaction androsta-1,4-diene-3,17-dione + 2 reduced [2Fe-2S]-[ferredoxin] + O2 + 2 H(+) = 9alpha-hydroxyandrosta-1,4-diene-3,17-dione + 2 oxidized [2Fe-2S]-[ferredoxin] + H2O. It participates in lipid metabolism; steroid biosynthesis. Functionally, involved in the degradation of cholesterol. Catalyzes the introduction of a 9a-hydroxyl moiety into 1,4-androstadiene-3,17-dione (ADD) to yield the 9alpha-hydroxy-1,4-androstadiene-3,17-dione (9OHADD) intermediate which spontaneously form 3-hydroxy-9,10-seconandrost-1,3,5(10)-triene-9,17-dione (HSA) via the meta-cleavage of ring B with concomitant aromatization of ring A. This chain is 3-ketosteroid-9-alpha-monooxygenase, oxygenase component (kshA), found in Mycolicibacterium smegmatis (strain ATCC 700084 / mc(2)155) (Mycobacterium smegmatis).